The following is a 122-amino-acid chain: Structural protein p14.5 (122 aa).

2 disordered regions span residues 1 to 27 (MADFNSPIQYLKEDSRDRTSIGSLEYD) and 85 to 122 (TSLVPEETDNKPEDDEESGAKPKKKKHLFPKLSSHKSK). Ala2 bears the N-acetylalanine; by host mark. Residues 105 to 122 (KPKKKKHLFPKLSSHKSK) are compositionally biased toward basic residues.

The protein belongs to the asfivirus structural protein p14.5 family. Interacts with the major capsid protein. Interacts with host IRF3; this interaction interferes with the recruitment of IRF3 to TBK1. In terms of processing, acetylated.

The protein localises to the virion. Functionally, structural protein required for transport of intracellular particles from the assembly sites to the plasma membrane. Binds to both ssDNA and dsDNA. Suppressed the activation of the cGAS/STING pathway by interfering with the recruitment of IRF3 to TBK1, which in turn suppresses IRF3 phosphorylation, decreasing interferon production. This African swine fever virus (isolate Tick/Malawi/Lil 20-1/1983) (ASFV) protein is Structural protein p14.5.